Consider the following 422-residue polypeptide: UDP-N-acetyl-D-glucosamine 6-dehydrogenase (422 aa).

NAD(+)-binding residues include V14, D32, R37, T83, and T118. The active-site Nucleophile is the C258. R329 is an NAD(+) binding site.

Belongs to the UDP-glucose/GDP-mannose dehydrogenase family.

The enzyme catalyses UDP-N-acetyl-alpha-D-glucosamine + 2 NAD(+) + H2O = UDP-2-acetamido-2-deoxy-alpha-D-glucuronate + 2 NADH + 3 H(+). It participates in bacterial outer membrane biogenesis; LPS O-antigen biosynthesis. Requires either potassium or ammonium-containing salts for activity. Its function is as follows. Dehydrogenase required for the biosynthesis of the B-band O antigen of serotype O6 lipopolysaccharide. Is also required for flagellin glycosylation. Catalyzes the conversion of UDP-N-acetylglucosamine (UDP-GlcNAc) to UDP-N-acetylglucosaminuronic acid (UDP-GlcNAcA). Can also catalyze the conversion of UDP-N-acetyl-galactosamine (UDP-GalNAc) to UDP-N-acetylgalactosaminuronic acid (UDP-GalNAcA), with low efficiency. Can use NAD(+) or NADP(+), with a preference for NAD(+). The polypeptide is UDP-N-acetyl-D-glucosamine 6-dehydrogenase (Pseudomonas aeruginosa).